Consider the following 754-residue polypeptide: RNA exonuclease 5 (754 aa).

The segment at 1 to 36 (MELEEEENPRKRKETPNSALTTELDRPSWDVQDPEP) is disordered. The region spanning 222-370 (LFGLDCEVCL…EDARTALELV (149 aa)) is the Exonuclease domain. 2 consecutive RRM domains span residues 488–562 (STIY…RLLT) and 583–662 (GTIY…RHLQ).

In Rattus norvegicus (Rat), this protein is RNA exonuclease 5 (Rexo5).